The chain runs to 340 residues: NADH-quinone oxidoreductase subunit H (340 aa).

8 consecutive transmembrane segments (helical) span residues 4–24 (TIGI…PLLI), 78–98 (YLFV…WAVI), 113–133 (VLYL…AGWA), 151–171 (VSYE…AGSM), 184–204 (MLHW…IAGI), 244–264 (SMIL…LSPF), 273–293 (IFFV…FLFV), and 316–336 (VLIP…VAHV).

This sequence belongs to the complex I subunit 1 family. NDH-1 is composed of 14 different subunits. Subunits NuoA, H, J, K, L, M, N constitute the membrane sector of the complex.

Its subcellular location is the cell inner membrane. It carries out the reaction a quinone + NADH + 5 H(+)(in) = a quinol + NAD(+) + 4 H(+)(out). Its function is as follows. NDH-1 shuttles electrons from NADH, via FMN and iron-sulfur (Fe-S) centers, to quinones in the respiratory chain. The immediate electron acceptor for the enzyme in this species is believed to be ubiquinone. Couples the redox reaction to proton translocation (for every two electrons transferred, four hydrogen ions are translocated across the cytoplasmic membrane), and thus conserves the redox energy in a proton gradient. This subunit may bind ubiquinone. In Legionella pneumophila (strain Corby), this protein is NADH-quinone oxidoreductase subunit H.